The primary structure comprises 172 residues: EPIDERMAL PATTERNING FACTOR-like protein 7 (172 aa).

Residues 1 to 27 (MDHVNPTLFHLKSLSIFTLTLLYISSP) form the signal peptide. 4 disulfide bridges follow: C128/C159, C132/C138, C135/C161, and C147/C153.

The protein belongs to the plant cysteine rich small secretory peptide family. Epidermal patterning factor subfamily.

Its subcellular location is the secreted. Its function is as follows. Controls stomatal patterning. This Arabidopsis thaliana (Mouse-ear cress) protein is EPIDERMAL PATTERNING FACTOR-like protein 7.